The following is a 377-amino-acid chain: tRNA pseudouridine synthase B (377 aa).

Asp-53 serves as the catalytic Nucleophile.

The protein belongs to the pseudouridine synthase TruB family. Type 1 subfamily.

The enzyme catalyses uridine(55) in tRNA = pseudouridine(55) in tRNA. Functionally, responsible for synthesis of pseudouridine from uracil-55 in the psi GC loop of transfer RNAs. This Tropheryma whipplei (strain Twist) (Whipple's bacillus) protein is tRNA pseudouridine synthase B.